Reading from the N-terminus, the 300-residue chain is HTH-type transcriptional regulator ArgP (300 aa).

The 57-residue stretch at 4–60 folds into the HTH lysR-type domain; that stretch reads FDYKLLAALAAVVEQGGFERAAQALGLSQSAVSQRIKLLEARVGQPVLVRETPPHPT. The H-T-H motif DNA-binding region spans 21–40; that stretch reads FERAAQALGLSQSAVSQRIK.

This sequence belongs to the LysR transcriptional regulatory family. Homodimer.

Functionally, controls the transcription of genes involved in arginine and lysine metabolism. The polypeptide is HTH-type transcriptional regulator ArgP (Pseudomonas aeruginosa (strain UCBPP-PA14)).